Here is a 102-residue protein sequence, read N- to C-terminus: Urease subunit beta (102 aa).

Belongs to the urease beta subunit family. In terms of assembly, heterotrimer of UreA (gamma), UreB (beta) and UreC (alpha) subunits. Three heterotrimers associate to form the active enzyme.

The protein resides in the cytoplasm. It carries out the reaction urea + 2 H2O + H(+) = hydrogencarbonate + 2 NH4(+). It participates in nitrogen metabolism; urea degradation; CO(2) and NH(3) from urea (urease route): step 1/1. This is Urease subunit beta from Acinetobacter baumannii (strain AB307-0294).